The chain runs to 337 residues: Glyceraldehyde-3-phosphate dehydrogenase 1, cytosolic (337 aa).

NAD(+) contacts are provided by residues 13–14, D35, and R82; that span reads RI. D-glyceraldehyde 3-phosphate contacts are provided by residues 153 to 155, T184, 213 to 214, and R236; these read SCT and TG. The Nucleophile role is filled by C154. Residue N318 participates in NAD(+) binding.

Belongs to the glyceraldehyde-3-phosphate dehydrogenase family. In terms of assembly, homotetramer. In terms of processing, phosphorylated after gibberellin treatment.

The protein localises to the cytoplasm. It catalyses the reaction D-glyceraldehyde 3-phosphate + phosphate + NAD(+) = (2R)-3-phospho-glyceroyl phosphate + NADH + H(+). The protein operates within carbohydrate degradation; glycolysis; pyruvate from D-glyceraldehyde 3-phosphate: step 1/5. Functionally, key enzyme in glycolysis that catalyzes the first step of the pathway by converting D-glyceraldehyde 3-phosphate (G3P) into 3-phospho-D-glyceroyl phosphate. Essential for the maintenance of cellular ATP levels and carbohydrate metabolism. This chain is Glyceraldehyde-3-phosphate dehydrogenase 1, cytosolic (GAPC1), found in Oryza sativa subsp. japonica (Rice).